A 150-amino-acid chain; its full sequence is UPF0178 protein Bcep1808_1605 (150 aa).

Belongs to the UPF0178 family.

This is UPF0178 protein Bcep1808_1605 from Burkholderia vietnamiensis (strain G4 / LMG 22486) (Burkholderia cepacia (strain R1808)).